Reading from the N-terminus, the 260-residue chain is LLATLPLAVHASPQPLEQIKLSESQLSGRVGMIEMDLASGRTLTAWRADERFPMMSTFKVVLCGAVLARVDAGDEQLERKIHYRQQDLVDYSPVSEKHLADGMTVGELCAAAITMSDNSAANLLLATVGGPAGLTAFLRQIGDNVTRLDRWETELNEALPGDARATTTPASMAATLRKLLTSQRLSARSQRQLLQWMVDDRVAGPLIRSVLPAGWFIADKTGAGERGARGIVALLGPNNKAERIVVIYLRDTPASMAERN.

A signal peptide spans 1-11; it reads LLATLPLAVHA. Catalysis depends on Ser-56, which acts as the Acyl-ester intermediate. Cysteines 63 and 109 form a disulfide. Catalysis depends on Glu-154, which acts as the Proton acceptor. 220-222 is a binding site for substrate; it reads KTG.

This sequence belongs to the class-A beta-lactamase family.

The catalysed reaction is a beta-lactam + H2O = a substituted beta-amino acid. SHV enzymes hydrolyze broad spectrum cephalosporins notably cefotaxime and ceftazidime. This chain is Beta-lactamase SHV-6 (bla), found in Klebsiella pneumoniae.